Consider the following 183-residue polypeptide: ATP synthase subunit delta (183 aa).

It belongs to the ATPase delta chain family. In terms of assembly, F-type ATPases have 2 components, F(1) - the catalytic core - and F(0) - the membrane proton channel. F(1) has five subunits: alpha(3), beta(3), gamma(1), delta(1), epsilon(1). F(0) has three main subunits: a(1), b(2) and c(10-14). The alpha and beta chains form an alternating ring which encloses part of the gamma chain. F(1) is attached to F(0) by a central stalk formed by the gamma and epsilon chains, while a peripheral stalk is formed by the delta and b chains.

The protein localises to the cell inner membrane. F(1)F(0) ATP synthase produces ATP from ADP in the presence of a proton or sodium gradient. F-type ATPases consist of two structural domains, F(1) containing the extramembraneous catalytic core and F(0) containing the membrane proton channel, linked together by a central stalk and a peripheral stalk. During catalysis, ATP synthesis in the catalytic domain of F(1) is coupled via a rotary mechanism of the central stalk subunits to proton translocation. Functionally, this protein is part of the stalk that links CF(0) to CF(1). It either transmits conformational changes from CF(0) to CF(1) or is implicated in proton conduction. The protein is ATP synthase subunit delta of Ehrlichia canis (strain Jake).